The sequence spans 332 residues: 5,10-methylenetetrahydromethanopterin reductase (332 aa).

This sequence belongs to the mer family.

It is found in the cytoplasm. The enzyme catalyses 5-methyl-5,6,7,8-tetrahydromethanopterin + oxidized coenzyme F420-(gamma-L-Glu)(n) + H(+) = 5,10-methylenetetrahydromethanopterin + reduced coenzyme F420-(gamma-L-Glu)(n). It functions in the pathway metabolic intermediate metabolism; lactate oxidation. Its function is as follows. Catalyzes the oxidation of methyl-H(4)MPT to methylene-H(4)MPT. The sequence is that of 5,10-methylenetetrahydromethanopterin reductase from Archaeoglobus fulgidus (strain ATCC 49558 / DSM 4304 / JCM 9628 / NBRC 100126 / VC-16).